A 514-amino-acid chain; its full sequence is Na(+)/H(+) antiporter NhaB (514 aa).

11 helical membrane-spanning segments follow: residues 13–33, 34–54, 96–116, 136–156, 203–223, 236–256, 304–324, 349–369, 392–412, 448–468, and 479–499; these read FMGN…IINP, LIFF…EFIF, VILL…LLLF, CFAS…AVVI, LMMH…VGEP, FVTF…AGLA, ALIG…VGII, EEAL…AVII, LFYL…VGTV, ATPN…SPLI, and ALPY…FWLV.

It belongs to the NhaB Na(+)/H(+) (TC 2.A.34) antiporter family.

The protein resides in the cell inner membrane. It carries out the reaction 2 Na(+)(in) + 3 H(+)(out) = 2 Na(+)(out) + 3 H(+)(in). Its function is as follows. Na(+)/H(+) antiporter that extrudes sodium in exchange for external protons. The sequence is that of Na(+)/H(+) antiporter NhaB from Proteus mirabilis (strain HI4320).